A 333-amino-acid polypeptide reads, in one-letter code: Holliday junction branch migration complex subunit RuvB (333 aa).

The large ATPase domain (RuvB-L) stretch occupies residues M1–Y182. ATP contacts are provided by residues L21, R22, G63, K66, T67, T68, E129–Y131, R172, Y182, and R219. T67 contacts Mg(2+). The small ATPAse domain (RuvB-S) stretch occupies residues Q183–Q253. The segment at R256–R333 is head domain (RuvB-H). DNA contacts are provided by R311 and R316.

It belongs to the RuvB family. As to quaternary structure, homohexamer. Forms an RuvA(8)-RuvB(12)-Holliday junction (HJ) complex. HJ DNA is sandwiched between 2 RuvA tetramers; dsDNA enters through RuvA and exits via RuvB. An RuvB hexamer assembles on each DNA strand where it exits the tetramer. Each RuvB hexamer is contacted by two RuvA subunits (via domain III) on 2 adjacent RuvB subunits; this complex drives branch migration. In the full resolvosome a probable DNA-RuvA(4)-RuvB(12)-RuvC(2) complex forms which resolves the HJ.

It localises to the cytoplasm. The enzyme catalyses ATP + H2O = ADP + phosphate + H(+). Functionally, the RuvA-RuvB-RuvC complex processes Holliday junction (HJ) DNA during genetic recombination and DNA repair, while the RuvA-RuvB complex plays an important role in the rescue of blocked DNA replication forks via replication fork reversal (RFR). RuvA specifically binds to HJ cruciform DNA, conferring on it an open structure. The RuvB hexamer acts as an ATP-dependent pump, pulling dsDNA into and through the RuvAB complex. RuvB forms 2 homohexamers on either side of HJ DNA bound by 1 or 2 RuvA tetramers; 4 subunits per hexamer contact DNA at a time. Coordinated motions by a converter formed by DNA-disengaged RuvB subunits stimulates ATP hydrolysis and nucleotide exchange. Immobilization of the converter enables RuvB to convert the ATP-contained energy into a lever motion, pulling 2 nucleotides of DNA out of the RuvA tetramer per ATP hydrolyzed, thus driving DNA branch migration. The RuvB motors rotate together with the DNA substrate, which together with the progressing nucleotide cycle form the mechanistic basis for DNA recombination by continuous HJ branch migration. Branch migration allows RuvC to scan DNA until it finds its consensus sequence, where it cleaves and resolves cruciform DNA. The chain is Holliday junction branch migration complex subunit RuvB from Geobacillus thermodenitrificans (strain NG80-2).